The following is a 316-amino-acid chain: Neuroguidin (316 aa).

Disordered stretches follow at residues S143–Y172 and S280–H316. The span at A145 to A157 shows a compositional bias: acidic residues. A compositionally biased stretch (basic residues) spans K297–H316.

Belongs to the SAS10 family. In terms of assembly, part of the small subunit (SSU) processome, composed of more than 70 proteins and the RNA chaperone small nucleolar RNA (snoRNA) U3.

Its subcellular location is the nucleus. The protein resides in the nucleolus. The protein localises to the chromosome. It is found in the centromere. It localises to the cytoplasm. Its subcellular location is the cell projection. The protein resides in the axon. The protein localises to the dendrite. It is found in the filopodium. Its function is as follows. Part of the small subunit (SSU) processome, first precursor of the small eukaryotic ribosomal subunit. During the assembly of the SSU processome in the nucleolus, many ribosome biogenesis factors, an RNA chaperone and ribosomal proteins associate with the nascent pre-rRNA and work in concert to generate RNA folding, modifications, rearrangements and cleavage as well as targeted degradation of pre-ribosomal RNA by the RNA exosome. Its dissociation from the complex determines the transition from state pre-A1 to state pre-A1*. May inhibit mRNA translation. This is Neuroguidin (ngdn) from Xenopus tropicalis (Western clawed frog).